Consider the following 208-residue polypeptide: Small ribosomal subunit protein uS4 (208 aa).

Positions 28-48 (YFEKRPYPPGEHGRARRRTES) are disordered. The S4 RNA-binding domain occupies 95-159 (MRLDALVLRS…ARTPFQVAAA (65 aa)).

This sequence belongs to the universal ribosomal protein uS4 family. As to quaternary structure, part of the 30S ribosomal subunit. Contacts protein S5. The interaction surface between S4 and S5 is involved in control of translational fidelity.

Its function is as follows. One of the primary rRNA binding proteins, it binds directly to 16S rRNA where it nucleates assembly of the body of the 30S subunit. In terms of biological role, with S5 and S12 plays an important role in translational accuracy. The sequence is that of Small ribosomal subunit protein uS4 from Beutenbergia cavernae (strain ATCC BAA-8 / DSM 12333 / CCUG 43141 / JCM 11478 / NBRC 16432 / NCIMB 13614 / HKI 0122).